Consider the following 446-residue polypeptide: MNAQEANFDGLVGPTHNYAGLSFGNVASLNNEKSAANPKAAAKQGLRKMKQLADLGFAQGVLPPQERPSLRLLRELGFSGKDADVIAKAAKQAPELLAAASSASAMWTANAATVSPSADTGDGRVHFTPANLCSKLHRAIEHDATRRTLSTLFADPAHFAVHEALTGTPALGDEGAANHTRFCAEYGKPGVEFFVYGRAEYRRGPEPKRFPARQTFEASRAVAQRHGLDETATVYAQQDPDVIDAGVFHNDVISVGNRDTLFTHERAFVNKQAIYDTLTATLDARGARLNVIEVPDAAVSVNDAVTSYLFNSQLLSRADGSQVLVVPQECRENAKVAAYLDELAAGNGPIRDVLVFDLRESMKNGGGPACLRLRVVLNDAERAAVTSNVWMNDTLFASLDAWIEKHYRDRLAPEDLADPTLLDESRTALDELTQILRVGSLYDFQR.

Substrate is bound by residues 19-28 (AGLSFGNVAS), asparagine 110, and 137-138 (HR). Residue glutamate 174 is part of the active site. Substrate is bound at residue arginine 213. Residue histidine 249 is part of the active site. Substrate is bound by residues aspartate 251 and asparagine 364. The Nucleophile role is filled by cysteine 370.

Belongs to the succinylarginine dihydrolase family. Homodimer.

The catalysed reaction is N(2)-succinyl-L-arginine + 2 H2O + 2 H(+) = N(2)-succinyl-L-ornithine + 2 NH4(+) + CO2. It functions in the pathway amino-acid degradation; L-arginine degradation via AST pathway; L-glutamate and succinate from L-arginine: step 2/5. Functionally, catalyzes the hydrolysis of N(2)-succinylarginine into N(2)-succinylornithine, ammonia and CO(2). This chain is N-succinylarginine dihydrolase, found in Burkholderia ambifaria (strain ATCC BAA-244 / DSM 16087 / CCUG 44356 / LMG 19182 / AMMD) (Burkholderia cepacia (strain AMMD)).